We begin with the raw amino-acid sequence, 511 residues long: 2,3-bisphosphoglycerate-independent phosphoglycerate mutase (511 aa).

Residue Asp12 coordinates Mn(2+). At Tyr36 the chain carries Phosphotyrosine. Residue Ser62 participates in Mn(2+) binding. Ser62 functions as the Phosphoserine intermediate in the catalytic mechanism. Substrate-binding positions include His123, 153–154 (RD), Arg185, Arg191, 261–264 (RPDR), and Lys336. The Mn(2+) site is built by Asp403, His407, Asp444, His445, and His462.

The protein belongs to the BPG-independent phosphoglycerate mutase family. In terms of assembly, monomer. Mn(2+) serves as cofactor.

The catalysed reaction is (2R)-2-phosphoglycerate = (2R)-3-phosphoglycerate. Its pathway is carbohydrate degradation; glycolysis; pyruvate from D-glyceraldehyde 3-phosphate: step 3/5. With respect to regulation, could be inhibited during sporulation by acidification of the forespore, thus allowing accumulation of the spore's large depot of 3-phosphoglyceric acid. In terms of biological role, essential for rapid growth and for sporulation. Catalyzes the interconversion of 2-phosphoglycerate (2-PGA) and 3-phosphoglycerate (3-PGA). In Geobacillus stearothermophilus (Bacillus stearothermophilus), this protein is 2,3-bisphosphoglycerate-independent phosphoglycerate mutase.